The chain runs to 270 residues: Large ribosomal subunit protein uL10 (270 aa).

The tract at residues 234-270 is disordered; the sequence is VTELEAGKTRPKREGNRRQAMNGDEMDEDQSSDEDSD. The span at 238-250 shows a compositional bias: basic and acidic residues; sequence EAGKTRPKREGNR. Residues 257 to 270 show a composition bias toward acidic residues; the sequence is DEMDEDQSSDEDSD.

It belongs to the universal ribosomal protein uL10 family. As to quaternary structure, associates with the pre-60S ribosomal particle.

It is found in the nucleus. It localises to the nucleolus. Its subcellular location is the cytoplasm. Component of the ribosome assembly machinery. Nuclear paralog of the ribosomal protein P0, it binds pre-60S subunits at an early stage of assembly in the nucleolus, and is replaced by P0 in cytoplasmic pre-60S subunits and mature 80S ribosomes. In Chaetomium thermophilum (strain DSM 1495 / CBS 144.50 / IMI 039719) (Thermochaetoides thermophila), this protein is Large ribosomal subunit protein uL10.